The following is a 398-amino-acid chain: Tryptophan synthase beta chain (398 aa).

The residue at position 90 (Lys90) is an N6-(pyridoxal phosphate)lysine.

Belongs to the TrpB family. As to quaternary structure, tetramer of two alpha and two beta chains. Pyridoxal 5'-phosphate serves as cofactor.

The enzyme catalyses (1S,2R)-1-C-(indol-3-yl)glycerol 3-phosphate + L-serine = D-glyceraldehyde 3-phosphate + L-tryptophan + H2O. It functions in the pathway amino-acid biosynthesis; L-tryptophan biosynthesis; L-tryptophan from chorismate: step 5/5. Its function is as follows. The beta subunit is responsible for the synthesis of L-tryptophan from indole and L-serine. In Anoxybacillus flavithermus (strain DSM 21510 / WK1), this protein is Tryptophan synthase beta chain.